The chain runs to 1502 residues: G patch domain-containing protein 8 (1502 aa).

The G-patch domain occupies 40–86; the sequence is SDNIGHRLLQKHGWKLGQGLGKSLQGRTDPIPIVVKYDVMGMGRMEM. Residues 89–124 are a coiled coil; the sequence is DYAEDATERRRVLEVEKEDTEELRQKYKDYVDKEKA. The C2H2-type zinc-finger motif lies at 136 to 160; the sequence is FYCELCDKQYQKHQEFDNHINSYDH. The interval 172-251 is disordered; that stretch reads REFARNVSSR…GATASCGLGS (80 aa). Over residues 182–206 the composition is skewed to basic and acidic residues; sequence SRKDEKKQEKALRRLHELAEQRKQA. Positions 223 to 233 are enriched in acidic residues; sequence VDEEGGEDDKD. Lys-311 participates in a covalent cross-link: Glycyl lysine isopeptide (Lys-Gly) (interchain with G-Cter in SUMO2). Basic and acidic residues-rich tracts occupy residues 323-339 and 424-436; these read AEEGTSEDGTKPDEKSS and NTTHPKNAPESKK. Disordered stretches follow at residues 323–391 and 419–541; these read AEEG…ATEP and QMDG…FPVL. Residues 459 to 472 are compositionally biased toward polar residues; it reads SEVSEQPKETSMTE. Lys-479 carries the post-translational modification N6-acetyllysine. Ser-491 is subject to Phosphoserine. A compositionally biased stretch (polar residues) spans 491 to 519; the sequence is SDQSLESHSQKVSETQMCESNSSKETSLA. Lys-577 is covalently cross-linked (Glycyl lysine isopeptide (Lys-Gly) (interchain with G-Cter in SUMO2)). 2 stretches are compositionally biased toward basic and acidic residues: residues 579–623 and 653–670; these read SRNK…EKIV and SETEDTGRSLPSKKERSG. The tract at residues 579–1301 is disordered; it reads SRNKDARTKG…ESTDGAEDAS (723 aa). Ser-653 carries the phosphoserine modification. A compositionally biased stretch (basic residues) spans 671-692; it reads KSHRHKKKKKHKKSSKHKRKHK. Positions 693–707 are enriched in basic and acidic residues; the sequence is ADTEEKSSKAESGEK. A compositionally biased stretch (basic residues) spans 708–720; sequence SKKRKKRKRKKNK. Pro residues predominate over residues 733–743; that stretch reads PEPPGSGSPAP. 3 positions are modified to phosphoserine: Ser-738, Ser-740, and Ser-758. Residues 750–772 are compositionally biased toward basic and acidic residues; the sequence is AQDDSQRRSLPAEEGSSGKKDEG. 2 stretches are compositionally biased toward basic residues: residues 799 to 809 and 852 to 867; these read AGTKRSSRSSH and SRSRSGRRHSSHRSSR. Positions 868–896 are enriched in low complexity; it reads RSYSSSSDASSDQSCYSRQRSYSDDSYSD. Residues Ser-911 and Ser-914 each carry the phosphoserine modification. Residues 919–928 show a composition bias toward basic residues; sequence SKHRSKRHKY. A phosphoserine mark is found at Ser-981, Ser-1009, Ser-1014, Ser-1033, and Ser-1035. The segment covering 1010–1027 has biased composition (basic and acidic residues); sequence WGHESPEERHSGRRDFIR. Basic and acidic residues predominate over residues 1042-1059; it reads GRGEGPGKKDDGRGDDSK. Residue Ser-1081 is modified to Phosphoserine. Composition is skewed to basic and acidic residues over residues 1093–1108 and 1159–1171; these read LLEKIQSRKVERKPSV and KKCEESGLERGEE. Lys-1105 participates in a covalent cross-link: Glycyl lysine isopeptide (Lys-Gly) (interchain with G-Cter in SUMO2). A Phosphoserine modification is found at Ser-1107. Ser-1175 carries the post-translational modification Phosphoserine.

This is G patch domain-containing protein 8 (GPATCH8) from Homo sapiens (Human).